A 276-amino-acid chain; its full sequence is uncharacterized protein (276 aa).

This is an uncharacterized protein from Acanthamoeba polyphaga mimivirus (APMV).